The sequence spans 211 residues: Endo-1,4-beta-xylanase 3 (211 aa).

Positions 1-27 (MKVTAAFAGLLVTAFAAPVPEPVLVSR) are cleaved as a signal peptide. In terms of domain architecture, GH11 spans 28–210 (SAGINYVQNY…GAGSASVTIS (183 aa)). Glutamate 106 functions as the Nucleophile in the catalytic mechanism. Cysteine 119 and cysteine 138 form a disulfide bridge. Glutamate 197 functions as the Proton donor in the catalytic mechanism.

The protein belongs to the glycosyl hydrolase 11 (cellulase G) family.

The protein resides in the secreted. It carries out the reaction Endohydrolysis of (1-&gt;4)-beta-D-xylosidic linkages in xylans.. It participates in glycan degradation; xylan degradation. This is Endo-1,4-beta-xylanase 3 (xynC) from Aspergillus kawachii (strain NBRC 4308) (White koji mold).